A 169-amino-acid chain; its full sequence is Phycobiliprotein beta chain (169 aa).

Asn-72 bears the N4-methylasparagine mark. Cys-82 is a (2R,3E)-phycocyanobilin binding site.

It belongs to the phycobiliprotein family. As to quaternary structure, heterodimer of an alpha and a beta chain. Post-translationally, contains one covalently linked bilin chromophore.

It is found in the cellular thylakoid membrane. In terms of biological role, light-harvesting photosynthetic bile pigment-protein from the phycobiliprotein complex. This is a protein functionally equivalent to, but with weaker absorbance than, allophycocyanin beta chain. The protein is Phycobiliprotein beta chain (apcD) of Mastigocladus laminosus (Fischerella sp.).